Consider the following 66-residue polypeptide: SPbeta prophage-derived uncharacterized protein YosK (66 aa).

The protein is SPbeta prophage-derived uncharacterized protein YosK (yosK) of Bacillus subtilis (strain 168).